The chain runs to 295 residues: 33 kDa chaperonin (295 aa).

2 disulfide bridges follow: Cys236–Cys238 and Cys269–Cys272.

Belongs to the HSP33 family. Post-translationally, under oxidizing conditions two disulfide bonds are formed involving the reactive cysteines. Under reducing conditions zinc is bound to the reactive cysteines and the protein is inactive.

The protein resides in the cytoplasm. Redox regulated molecular chaperone. Protects both thermally unfolding and oxidatively damaged proteins from irreversible aggregation. Plays an important role in the bacterial defense system toward oxidative stress. The chain is 33 kDa chaperonin from Geobacter sp. (strain M21).